Consider the following 83-residue polypeptide: Polcalcin Bra r 2 (83 aa).

2 consecutive EF-hand domains span residues 5-40 and 43-75; these read TEKAEHDRIFKKFDANGDGKISASELGDALKNLGSV and DDIKRMMAEIDTDGDGYISYQEFSDFASANRGL. Residues Asp18, Asn20, Asp22, Lys24, Glu29, Asp53, Asp55, Asp57, Tyr59, and Glu64 each contribute to the Ca(2+) site.

This chain is Polcalcin Bra r 2, found in Brassica campestris (Field mustard).